A 512-amino-acid polypeptide reads, in one-letter code: Histidine ammonia-lyase (512 aa).

Residues 146 to 148 (ASG) constitute a cross-link (5-imidazolinone (Ala-Gly)). Residue S147 is modified to 2,3-didehydroalanine (Ser).

It belongs to the PAL/histidase family. Contains an active site 4-methylidene-imidazol-5-one (MIO), which is formed autocatalytically by cyclization and dehydration of residues Ala-Ser-Gly.

The protein localises to the cytoplasm. The enzyme catalyses L-histidine = trans-urocanate + NH4(+). It participates in amino-acid degradation; L-histidine degradation into L-glutamate; N-formimidoyl-L-glutamate from L-histidine: step 1/3. The polypeptide is Histidine ammonia-lyase (Paracidovorax citrulli (strain AAC00-1) (Acidovorax citrulli)).